The following is a 919-amino-acid chain: MTAPWRRLRSLVWEYWAGLLVCAFWIPDSRGMPHVIRIGGIFEYADGPNAQVMNAEEHAFRFSANIINRNRTLLPNTTLTYDIQRIHFHDSFEATKKACDQLALGVVAIFGPSQGSCTNAVQSICNALEVPHIQLRWKHHPLDNKDTFYVNLYPDYASLSHAILDLVQYLKWRSATVVYDDSTGLIRLQELIMAPSRYNIRLKIRQLPVDSDDSRPLLKEMKRGREFRIIFDCSHTMAAQILKQAMAMGMMTEYYHFIFTTLDLYALDLEPYRYSGVNLTGFRILNVDNPHVSAIVEKWSMERLQAAPRAESGLLDGVMMTDAALLYDAVHIVSVCYQRAPQMTVNSLQCHRHKAWRFGGRFMNFIKEAQWEGLTGRIVFNKTSGLRTDFDLDIISLKEDGLEKVGVWSPADGLNITEVAKGRGPNVTDSLTNRSLIVTTVLEEPFVMFRKSDRTLYGNDRFEGYCIDLLKELAHILGFSYEIRLVEDGKYGAQDDKGQWNGMVKELIDHKADLAVAPLTITHVREKAIDFSKPFMTLGVSILYRKPNGTNPSVFSFLNPLSPDIWMYVLLAYLGVSCVLFVIARFSPYEWYDAHPCNPGSEVVENNFTLLNSFWFGMGSLMQQGSELMPKALSTRIIGGIWWFFTLIIISSYTANLAAFLTVERMESPIDSADDLAKQTKIEYGAVKDGATMTFFKKSKISTFEKMWAFMSSKPSALVKNNEEGIQRALTADYALLMESTTIEYVTQRNCNLTQIGGLIDSKGYGIGTPMGSPYRDKITIAILQLQEEDKLHIMKEKWWRGSGCPEEENKEASALGIQKIGGIFIVLAAGLVLSVLVAVGEFVYKLRKTAEREQRSFCSTVADEIRFSLTCQRRVKHKPQPPMMVKTDAVINMHTFNDRRLPGKDSMACSTSLAPVFP.

Residues 1-31 form the signal peptide; the sequence is MTAPWRRLRSLVWEYWAGLLVCAFWIPDSRG. At 32-563 the chain is on the extracellular side; it reads MPHVIRIGGI…VFSFLNPLSP (532 aa). Asn70, Asn76, Asn278, Asn381, Asn415, Asn426, and Asn433 each carry an N-linked (GlcNAc...) asparagine glycan. Cys99 and Cys350 are oxidised to a cystine. 3 residues coordinate L-glutamate: Pro518, Thr520, and Arg525. Residues Asn548 and Asn551 are each glycosylated (N-linked (GlcNAc...) asparagine). A helical transmembrane segment spans residues 564 to 584; it reads DIWMYVLLAYLGVSCVLFVIA. Over 585–636 the chain is Cytoplasmic; that stretch reads RFSPYEWYDAHPCNPGSEVVENNFTLLNSFWFGMGSLMQQGSELMPKALSTR. A helical transmembrane segment spans residues 637–657; it reads IIGGIWWFFTLIIISSYTANL. The Extracellular portion of the chain corresponds to 658–820; the sequence is AAFLTVERME…KEASALGIQK (163 aa). Residues Ala691, Thr692, and Glu739 each coordinate L-glutamate. Asn752 carries an N-linked (GlcNAc...) asparagine glycan. The chain crosses the membrane as a helical span at residues 821 to 841; it reads IGGIFIVLAAGLVLSVLVAVG. Residues 842–919 lie on the Cytoplasmic side of the membrane; it reads EFVYKLRKTA…CSTSLAPVFP (78 aa). The residue at position 869 (Ser869) is a Phosphoserine. Lys887 is covalently cross-linked (Glycyl lysine isopeptide (Lys-Gly) (interchain with G-Cter in SUMO1)).

The protein belongs to the glutamate-gated ion channel (TC 1.A.10.1) family. GRIK3 subfamily. Homotetramer, and heterotetramer with either GRIK4 or GRIK5. Can form functional heteromeric receptors with GRIK2. Interacts with PRKCABP. Interacts with NETO2.

It is found in the cell membrane. The protein resides in the postsynaptic cell membrane. The enzyme catalyses Ca(2+)(in) = Ca(2+)(out). Ionotropic glutamate receptor that functions as a cation-permeable ligand-gated ion channel, gated by L-glutamate and the glutamatergic agonist kainic acid. Binding of the excitatory neurotransmitter L-glutamate induces a conformation change, leading to the opening of the cation channel, and thereby converts the chemical signal to an electrical impulse. The receptor then desensitizes rapidly and enters a transient inactive state, characterized by the presence of bound agonist. In association with GRIK2, involved in presynaptic facilitation of glutamate release at hippocampal mossy fiber synapses. This Macaca fascicularis (Crab-eating macaque) protein is Glutamate receptor ionotropic, kainate 3 (GRIK3).